Reading from the N-terminus, the 570-residue chain is Periplasmic trehalase (570 aa).

The first 34 residues, 1–34 (MIPPEIRRSVLLQKAIKLALAGTLLTFASFSATA), serve as a signal peptide directing secretion. Substrate contacts are provided by residues Arg159, 166–167 (WD), Asn203, 212–214 (RSQ), 284–286 (RPE), and Gly317. Residues Asp319 and Glu503 each act as proton donor/acceptor in the active site. Glu518 is a substrate binding site. A disordered region spans residues 544–570 (KPCDSVPSTRPASLSATPTKTPSAATQ). Residues 554–570 (PASLSATPTKTPSAATQ) are compositionally biased toward low complexity.

The protein belongs to the glycosyl hydrolase 37 family. Monomer.

The protein localises to the periplasm. It catalyses the reaction alpha,alpha-trehalose + H2O = alpha-D-glucose + beta-D-glucose. Functionally, provides the cells with the ability to utilize trehalose at high osmolarity by splitting it into glucose molecules that can subsequently be taken up by the phosphotransferase-mediated uptake system. This is Periplasmic trehalase from Salmonella typhimurium (strain LT2 / SGSC1412 / ATCC 700720).